Reading from the N-terminus, the 93-residue chain is uncharacterized protein (93 aa).

This is an uncharacterized protein from Escherichia coli (strain K12).